Reading from the N-terminus, the 219-residue chain is ATP phosphoribosyltransferase (219 aa).

This sequence belongs to the ATP phosphoribosyltransferase family. Short subfamily. In terms of assembly, heteromultimer composed of HisG and HisZ subunits.

It is found in the cytoplasm. It carries out the reaction 1-(5-phospho-beta-D-ribosyl)-ATP + diphosphate = 5-phospho-alpha-D-ribose 1-diphosphate + ATP. It functions in the pathway amino-acid biosynthesis; L-histidine biosynthesis; L-histidine from 5-phospho-alpha-D-ribose 1-diphosphate: step 1/9. Functionally, catalyzes the condensation of ATP and 5-phosphoribose 1-diphosphate to form N'-(5'-phosphoribosyl)-ATP (PR-ATP). Has a crucial role in the pathway because the rate of histidine biosynthesis seems to be controlled primarily by regulation of HisG enzymatic activity. This chain is ATP phosphoribosyltransferase, found in Clostridium kluyveri (strain NBRC 12016).